We begin with the raw amino-acid sequence, 159 residues long: Ribosomal RNA large subunit methyltransferase H (159 aa).

Residues L76, G108, and 127-132 (FGRMTL) each bind S-adenosyl-L-methionine.

This sequence belongs to the RNA methyltransferase RlmH family. As to quaternary structure, homodimer.

It localises to the cytoplasm. The enzyme catalyses pseudouridine(1915) in 23S rRNA + S-adenosyl-L-methionine = N(3)-methylpseudouridine(1915) in 23S rRNA + S-adenosyl-L-homocysteine + H(+). Specifically methylates the pseudouridine at position 1915 (m3Psi1915) in 23S rRNA. This chain is Ribosomal RNA large subunit methyltransferase H, found in Lactococcus lactis subsp. cremoris (strain SK11).